Consider the following 482-residue polypeptide: tRNA sulfurtransferase (482 aa).

Residues leucine 61–arginine 165 form the THUMP domain. Residues leucine 183–isoleucine 184, lysine 265, glycine 287, and glutamine 296 contribute to the ATP site. An intrachain disulfide couples cysteine 344 to cysteine 456. Residues phenylalanine 404–proline 482 form the Rhodanese domain. The active-site Cysteine persulfide intermediate is the cysteine 456.

This sequence belongs to the ThiI family.

It is found in the cytoplasm. It carries out the reaction [ThiI sulfur-carrier protein]-S-sulfanyl-L-cysteine + a uridine in tRNA + 2 reduced [2Fe-2S]-[ferredoxin] + ATP + H(+) = [ThiI sulfur-carrier protein]-L-cysteine + a 4-thiouridine in tRNA + 2 oxidized [2Fe-2S]-[ferredoxin] + AMP + diphosphate. The enzyme catalyses [ThiS sulfur-carrier protein]-C-terminal Gly-Gly-AMP + S-sulfanyl-L-cysteinyl-[cysteine desulfurase] + AH2 = [ThiS sulfur-carrier protein]-C-terminal-Gly-aminoethanethioate + L-cysteinyl-[cysteine desulfurase] + A + AMP + 2 H(+). Its pathway is cofactor biosynthesis; thiamine diphosphate biosynthesis. Functionally, catalyzes the ATP-dependent transfer of a sulfur to tRNA to produce 4-thiouridine in position 8 of tRNAs, which functions as a near-UV photosensor. Also catalyzes the transfer of sulfur to the sulfur carrier protein ThiS, forming ThiS-thiocarboxylate. This is a step in the synthesis of thiazole, in the thiamine biosynthesis pathway. The sulfur is donated as persulfide by IscS. The protein is tRNA sulfurtransferase of Escherichia coli (strain K12 / MC4100 / BW2952).